Consider the following 207-residue polypeptide: Holliday junction branch migration complex subunit RuvA (207 aa).

Residues 1 to 68 are domain I; the sequence is MIGYLQGSLA…EDQWLLFGFL (68 aa). The interval 69–147 is domain II; the sequence is QMAERDLFRQ…EWREEAGLLP (79 aa). The interval 148–158 is flexible linker; it reads SATAAPIAAVQ. The segment at 158–207 is domain III; the sequence is QEDVEMTLLALGYNNREILQALTAIAQENLVQSGQPAEDWIREAIAWLSR.

The protein belongs to the RuvA family. Homotetramer. Forms an RuvA(8)-RuvB(12)-Holliday junction (HJ) complex. HJ DNA is sandwiched between 2 RuvA tetramers; dsDNA enters through RuvA and exits via RuvB. An RuvB hexamer assembles on each DNA strand where it exits the tetramer. Each RuvB hexamer is contacted by two RuvA subunits (via domain III) on 2 adjacent RuvB subunits; this complex drives branch migration. In the full resolvosome a probable DNA-RuvA(4)-RuvB(12)-RuvC(2) complex forms which resolves the HJ.

The protein resides in the cytoplasm. In terms of biological role, the RuvA-RuvB-RuvC complex processes Holliday junction (HJ) DNA during genetic recombination and DNA repair, while the RuvA-RuvB complex plays an important role in the rescue of blocked DNA replication forks via replication fork reversal (RFR). RuvA specifically binds to HJ cruciform DNA, conferring on it an open structure. The RuvB hexamer acts as an ATP-dependent pump, pulling dsDNA into and through the RuvAB complex. HJ branch migration allows RuvC to scan DNA until it finds its consensus sequence, where it cleaves and resolves the cruciform DNA. The polypeptide is Holliday junction branch migration complex subunit RuvA (Synechococcus elongatus (strain ATCC 33912 / PCC 7942 / FACHB-805) (Anacystis nidulans R2)).